A 278-amino-acid polypeptide reads, in one-letter code: Putative transposase for insertion sequence element IS986/IS6110 (278 aa).

The region spanning 101-268 is the Integrase catalytic domain; sequence GPPAPNRLWV…VPPVELEAAY (168 aa).

Its function is as follows. Involved in the transposition of the insertion sequence. The chain is Putative transposase for insertion sequence element IS986/IS6110 from Mycobacterium tuberculosis (strain CDC 1551 / Oshkosh).